The chain runs to 326 residues: Zinc transporter 11 (326 aa).

The N-terminal stretch at 1–20 (MSRSLVFFFLFLVLVVPCLS) is a signal peptide. Residues 21–49 (HGTGGDHDDDEASHVKSSDLKSKSLISVK) are Extracellular-facing. A helical membrane pass occupies residues 50–70 (IACLVIIFVLTFISGVSPYFL). Residues 71 to 75 (KWSQG) are Cytoplasmic-facing. A helical membrane pass occupies residues 76–96 (FLVLGTQFAGGVFLATALMHF). Residues 97–121 (LSDADETFRGLLTAEGESEPSPAYP) lie on the Extracellular side of the membrane. The chain crosses the membrane as a helical span at residues 122-142 (FAYMLACAGFMLTMLADSVIA). Residues 143–174 (HIYSKTQNDLELQGEDKSNQRSATTETSIGDS) are Cytoplasmic-facing. Residues 175 to 195 (ILLIVALCFHSVFEGIAIGIS) form a helical membrane-spanning segment. The Extracellular portion of the chain corresponds to 196 to 203 (ETKSDAWR). A helical membrane pass occupies residues 204–224 (ALWTITLHKIFAAIAMGIALL). Residues 225–235 (RMIPDRPLFSS) lie on the Cytoplasmic side of the membrane. The chain crosses the membrane as a helical span at residues 236–256 (ITYSFAFAISSPIGVAIGIVI). Over 257-262 (DATTQG) the chain is Extracellular. A helical membrane pass occupies residues 263–283 (SIADWIFALSMSLACGVFVYV). Over 284–305 (SVNHLLAKGYRPNKKVHVDEPR) the chain is Cytoplasmic. A helical transmembrane segment spans residues 306 to 326 (YKFLAVLFGVVVIAIVMIWDT).

The protein belongs to the ZIP transporter (TC 2.A.5) family.

It localises to the cell membrane. Functionally, probably mediates zinc uptake from the rhizosphere. The protein is Zinc transporter 11 (ZIP11) of Arabidopsis thaliana (Mouse-ear cress).